Consider the following 148-residue polypeptide: Large ribosomal subunit protein uL16 (148 aa).

Belongs to the universal ribosomal protein uL16 family. As to quaternary structure, part of the 50S ribosomal subunit.

In terms of biological role, binds 23S rRNA and is also seen to make contacts with the A and possibly P site tRNAs. The sequence is that of Large ribosomal subunit protein uL16 from Gloeobacter violaceus (strain ATCC 29082 / PCC 7421).